Here is a 227-residue protein sequence, read N- to C-terminus: Protein rapunzel (227 aa).

A helical membrane pass occupies residues 179-196 (LAYLFCIGFIALMGYYGI).

It localises to the membrane. The chain is Protein rapunzel from Danio rerio (Zebrafish).